Reading from the N-terminus, the 156-residue chain is Cytochrome c-type biogenesis protein CcmE 2 (156 aa).

Residues 1–8 (MNPQRRRR) are Cytoplasmic-facing. Residues 9–29 (LWLVLALVLAGGLATTLVAMA) traverse the membrane as a helical; Signal-anchor for type II membrane protein segment. Topologically, residues 30–156 (LQRNVAYLYT…AAAGQVGERQ (127 aa)) are periplasmic. Histidine 123 and tyrosine 127 together coordinate heme. The segment at 136 to 156 (MGSAHRKHDVPAAAGQVGERQ) is disordered.

This sequence belongs to the CcmE/CycJ family.

Its subcellular location is the cell inner membrane. Heme chaperone required for the biogenesis of c-type cytochromes. Transiently binds heme delivered by CcmC and transfers the heme to apo-cytochromes in a process facilitated by CcmF and CcmH. This Xanthomonas axonopodis pv. citri (strain 306) protein is Cytochrome c-type biogenesis protein CcmE 2.